Consider the following 366-residue polypeptide: RNA 3'-terminal phosphate cyclase (366 aa).

Positions 104, 131, 294, 297, 298, and 320 each coordinate ATP. His320 functions as the Tele-AMP-histidine intermediate in the catalytic mechanism.

The protein belongs to the RNA 3'-terminal cyclase family. Type 1 subfamily.

It localises to the nucleus. The protein localises to the nucleoplasm. The catalysed reaction is a 3'-end 3'-phospho-ribonucleotide-RNA + ATP = a 3'-end 2',3'-cyclophospho-ribonucleotide-RNA + AMP + diphosphate. Catalyzes the conversion of 3'-phosphate to a 2',3'-cyclic phosphodiester at the end of RNA. The mechanism of action of the enzyme occurs in 3 steps: (A) adenylation of the enzyme by ATP; (B) transfer of adenylate to an RNA-N3'P to produce RNA-N3'PP5'A; (C) and attack of the adjacent 2'-hydroxyl on the 3'-phosphorus in the diester linkage to produce the cyclic end product. Likely functions in some aspects of cellular RNA processing. Function plays an important role in regulating axon regeneration by inhibiting central nervous system (CNS) axon regeneration following optic nerve injury. The protein is RNA 3'-terminal phosphate cyclase (RTCA) of Bos taurus (Bovine).